A 414-amino-acid chain; its full sequence is Dothistromin biosynthesis peroxidase dotB (414 aa).

Residues 1 to 18 form the signal peptide; the sequence is MHFFSAIVLTCLASTAVA. Cys72 is a binding site for heme. N-linked (GlcNAc...) asparagine glycosylation is found at Asn187, Asn241, and Asn328.

This sequence belongs to the chloroperoxidase family. The cofactor is heme b.

It participates in mycotoxin biosynthesis. Its function is as follows. Peroxidase; part of the fragmented gene cluster that mediates the biosynthesis of dothistromin (DOTH), a polyketide toxin very similar in structure to the aflatoxin precursor, versicolorin B. The first step of the pathway is the conversion of acetate to norsolorinic acid (NOR) and requires the fatty acid synthase subunits hexA and hexB, as well as the polyketide synthase pksA. PksA combines a hexanoyl starter unit and 7 malonyl-CoA extender units to synthesize the precursor NOR. The hexanoyl starter unit is provided to the acyl-carrier protein (ACP) domain by the fungal fatty acid synthase hexA/hexB. The second step is the conversion of NOR to averantin (AVN) and requires the norsolorinic acid ketoreductase nor1, which catalyzes the dehydration of norsolorinic acid to form (1'S)-averantin. The cytochrome P450 monooxygenase avnA then catalyzes the hydroxylation of AVN to 5'hydroxyaverantin (HAVN). The next step is performed by adhA that transforms HAVN to averufin (AVF). Averufin might then be converted to hydroxyversicolorone by cypX and avfA. Hydroxyversicolorone is further converted versiconal hemiacetal acetate (VHA) by moxY. VHA is then the substrate for the versiconal hemiacetal acetate esterase est1 to yield versiconal (VAL). Versicolorin B synthase vbsA then converts VAL to versicolorin B (VERB) by closing the bisfuran ring. Then, the activity of the versicolorin B desaturase verB leads to versicolorin A (VERA). DotB, a predicted chloroperoxidase, may perform epoxidation of the A-ring of VERA. Alternatively, a cytochrome P450, such as cypX or avnA could catalyze this step. It is also possible that another, uncharacterized, cytochrome P450 enzyme is responsible for this step. Opening of the epoxide could potentially be achieved by the epoxide hydrolase epoA. However, epoA seems not to be required for DOTH biosynthesis, but other epoxide hydrolases may have the ability to complement this hydrolysis. Alternatively, opening of the epoxide ring could be achieved non-enzymatically. The next step is the deoxygenation of ring A to yield the 5,8-dihydroxyanthraquinone which is most likely catalyzed by the NADPH dehydrogenase encoded by ver1. The last stages of DOTH biosynthesis are proposed to involve hydroxylation of the bisfuran. OrdB and norB might have oxidative roles here. An alternative possibility is that cytochrome P450 monoogenases such as avnA and cypX might perform these steps in addition to previously proposed steps. This is Dothistromin biosynthesis peroxidase dotB from Dothistroma septosporum (Red band needle blight fungus).